A 475-amino-acid polypeptide reads, in one-letter code: Adenosylhomocysteinase (475 aa).

Residues threonine 63, aspartate 138, and glutamate 199 each contribute to the substrate site. Residue 200-202 coordinates NAD(+); that stretch reads TTT. Substrate is bound by residues lysine 229 and aspartate 233. NAD(+) is bound by residues asparagine 234, 263 to 268, glutamate 286, asparagine 321, 342 to 344, and asparagine 389; these read GYGDVG and IGH.

Belongs to the adenosylhomocysteinase family. It depends on NAD(+) as a cofactor.

Its subcellular location is the cytoplasm. The catalysed reaction is S-adenosyl-L-homocysteine + H2O = L-homocysteine + adenosine. The protein operates within amino-acid biosynthesis; L-homocysteine biosynthesis; L-homocysteine from S-adenosyl-L-homocysteine: step 1/1. In terms of biological role, may play a key role in the regulation of the intracellular concentration of adenosylhomocysteine. This chain is Adenosylhomocysteinase, found in Solibacter usitatus (strain Ellin6076).